The chain runs to 63 residues: Cypmaclein (63 aa).

Belongs to the GASA family. As to expression, expressed in pollen (at protein level).

This is Cypmaclein from Juniperus ashei (Ozark white cedar).